Here is a 209-residue protein sequence, read N- to C-terminus: ATP-dependent Clp protease proteolytic subunit (209 aa).

Ser106 serves as the catalytic Nucleophile. Residue His131 is part of the active site.

The protein belongs to the peptidase S14 family. As to quaternary structure, fourteen ClpP subunits assemble into 2 heptameric rings which stack back to back to give a disk-like structure with a central cavity, resembling the structure of eukaryotic proteasomes.

It localises to the cytoplasm. The catalysed reaction is Hydrolysis of proteins to small peptides in the presence of ATP and magnesium. alpha-casein is the usual test substrate. In the absence of ATP, only oligopeptides shorter than five residues are hydrolyzed (such as succinyl-Leu-Tyr-|-NHMec, and Leu-Tyr-Leu-|-Tyr-Trp, in which cleavage of the -Tyr-|-Leu- and -Tyr-|-Trp bonds also occurs).. Its function is as follows. Cleaves peptides in various proteins in a process that requires ATP hydrolysis. Has a chymotrypsin-like activity. Plays a major role in the degradation of misfolded proteins. The protein is ATP-dependent Clp protease proteolytic subunit of Caulobacter vibrioides (strain ATCC 19089 / CIP 103742 / CB 15) (Caulobacter crescentus).